Here is a 179-residue protein sequence, read N- to C-terminus: Macro domain-containing protein XCC3184 (179 aa).

The Macro domain maps to 1–175 (MRIEVWQGDI…AYHQALATQE (175 aa)).

The protein belongs to the MacroD-type family.

This is Macro domain-containing protein XCC3184 from Xanthomonas campestris pv. campestris (strain ATCC 33913 / DSM 3586 / NCPPB 528 / LMG 568 / P 25).